We begin with the raw amino-acid sequence, 369 residues long: N-succinylamino acid racemase (369 aa).

Lysine 163 acts as the Proton donor in catalysis. Mg(2+) contacts are provided by aspartate 188, glutamate 213, and aspartate 238. Catalysis depends on lysine 262, which acts as the Proton acceptor.

This sequence belongs to the mandelate racemase/muconate lactonizing enzyme family. MenC type 2 subfamily. As to quaternary structure, homooctamer. Tetramer of dimers. The cofactor is a divalent metal cation.

It carries out the reaction (1R,6R)-6-hydroxy-2-succinyl-cyclohexa-2,4-diene-1-carboxylate = 2-succinylbenzoate + H2O. Its function is as follows. Acts as a N-succinylamino acid racemase (NSAR) that catalyzes the racemization of N-succinyl-L-phenylglycine. Also converts 2-succinyl-6-hydroxy-2,4-cyclohexadiene-1-carboxylate (SHCHC) to 2-succinylbenzoate (OSB). Catalyzes both N-succinylamino acid racemization and OSB synthesis at equivalent rates. However, NSAR activity is probably the protein's biological function, because menaquinone biosynthesis genes are missing in this species. The protein is N-succinylamino acid racemase of Thermus thermophilus (strain ATCC 27634 / DSM 579 / HB8).